Here is a 99-residue protein sequence, read N- to C-terminus: RNA-binding protein Hfq (99 aa).

One can recognise a Sm domain in the interval 9 to 68 (DPYLNALRRERIPVSIYLVNGIKLQGQIESFDQFVILLKNTVNQMVYKHAISTVVPARSV). Positions 67 to 99 (SVSHHNNNAQQQYQQQAAQAASAQSNETSSQAE) are disordered. A compositionally biased stretch (low complexity) spans 72-99 (NNNAQQQYQQQAAQAASAQSNETSSQAE).

Belongs to the Hfq family. Homohexamer.

RNA chaperone that binds small regulatory RNA (sRNAs) and mRNAs to facilitate mRNA translational regulation in response to envelope stress, environmental stress and changes in metabolite concentrations. Also binds with high specificity to tRNAs. The sequence is that of RNA-binding protein Hfq from Actinobacillus succinogenes (strain ATCC 55618 / DSM 22257 / CCUG 43843 / 130Z).